We begin with the raw amino-acid sequence, 577 residues long: Sensor histidine kinase YesM (577 aa).

The Cytoplasmic segment spans residues 1-17 (MKKRVAGWYRRMKIKDK). Residues 18–38 (LFVFLSLIMAVSFLFVYSGVQ) traverse the membrane as a helical segment. The Extracellular segment spans residues 39–286 (YAFHVYDEQI…PFDQMFAKIS (248 aa)). Residues 287–307 (FMKTVIGTCFLLFFCVVLLFG) traverse the membrane as a helical segment. Topologically, residues 308 to 577 (RKIANSITEP…ITIPCRNEVV (270 aa)) are cytoplasmic. The HAMP domain occupies 312–368 (NSITEPIEQLVTAMKSVQHSGIEAGVSLSLPEHTQDEAGMLNRHFTVMMKRINELME). In terms of domain architecture, Histidine kinase spans 365-574 (ELMEENVEKQ…RIVITIPCRN (210 aa)). H392 is modified (phosphohistidine; by autocatalysis).

It localises to the cell membrane. The enzyme catalyses ATP + protein L-histidine = ADP + protein N-phospho-L-histidine.. Member of the two-component regulatory system YesM/YesN. Probably activates YesN by phosphorylation. The chain is Sensor histidine kinase YesM (yesM) from Bacillus subtilis (strain 168).